We begin with the raw amino-acid sequence, 267 residues long: Putative ankyrin repeat protein RF_1099 (267 aa).

4 ANK repeats span residues 46–75 (DPITPIADAIKADNLEEVKKILDEGYGVNQ), 78–107 (LGWVPLDYAISNNNIKIADFLLKRDASMSL), 136–165 (DGITGMMLAAERNNPDLIKLLLKLGVNPNV), and 170–199 (TGMTSLMYAASYLNVEVVRVLLEQGVDPNI). Positions 238-265 (KQKIIKERNSIKTRNKEKEKEIKKLFNS) form a coiled coil.

The protein is Putative ankyrin repeat protein RF_1099 of Rickettsia felis (strain ATCC VR-1525 / URRWXCal2) (Rickettsia azadi).